We begin with the raw amino-acid sequence, 348 residues long: Dihydroorotase (348 aa).

Zn(2+)-binding residues include histidine 17 and histidine 19. Residues 19–21 (HLR) and asparagine 45 contribute to the substrate site. Lysine 103, histidine 140, and histidine 178 together coordinate Zn(2+). N6-carboxylysine is present on lysine 103. Histidine 140 is a substrate binding site. Residue leucine 223 participates in substrate binding. Aspartate 251 contributes to the Zn(2+) binding site. Aspartate 251 is a catalytic residue. Substrate contacts are provided by histidine 255 and alanine 267.

It belongs to the metallo-dependent hydrolases superfamily. DHOase family. Class II DHOase subfamily. Homodimer. Zn(2+) serves as cofactor.

The catalysed reaction is (S)-dihydroorotate + H2O = N-carbamoyl-L-aspartate + H(+). It participates in pyrimidine metabolism; UMP biosynthesis via de novo pathway; (S)-dihydroorotate from bicarbonate: step 3/3. Catalyzes the reversible cyclization of carbamoyl aspartate to dihydroorotate. The polypeptide is Dihydroorotase (Salmonella arizonae (strain ATCC BAA-731 / CDC346-86 / RSK2980)).